A 651-amino-acid polypeptide reads, in one-letter code: Chaperone protein dnaK1 (651 aa).

T197 is modified (phosphothreonine; by autocatalysis).

The protein belongs to the heat shock protein 70 family.

Acts as a chaperone. The protein is Chaperone protein dnaK1 (dnaK1) of Thermosynechococcus vestitus (strain NIES-2133 / IAM M-273 / BP-1).